The primary structure comprises 601 residues: Glutamine--fructose-6-phosphate aminotransferase [isomerizing] (601 aa).

Catalysis depends on C2, which acts as the Nucleophile; for GATase activity. Residues 2–214 form the Glutamine amidotransferase type-2 domain; that stretch reads CGITGYIGTD…NGDIAHLTET (213 aa). 2 consecutive SIS domains span residues 281-420 and 453-591; these read STET…ARNA and IGRE…IDKP. The active-site For Fru-6P isomerization activity is K596.

Homodimer.

Its subcellular location is the cytoplasm. It carries out the reaction D-fructose 6-phosphate + L-glutamine = D-glucosamine 6-phosphate + L-glutamate. In terms of biological role, catalyzes the first step in hexosamine metabolism, converting fructose-6P into glucosamine-6P using glutamine as a nitrogen source. This chain is Glutamine--fructose-6-phosphate aminotransferase [isomerizing], found in Halobacterium salinarum (strain ATCC 700922 / JCM 11081 / NRC-1) (Halobacterium halobium).